The chain runs to 429 residues: 3-phosphoshikimate 1-carboxyvinyltransferase (429 aa).

3-phosphoshikimate-binding residues include K23, S24, and R28. K23 lines the phosphoenolpyruvate pocket. 2 residues coordinate phosphoenolpyruvate: G97 and R125. 3-phosphoshikimate is bound by residues S170, S171, Q172, S198, D314, N338, and K342. Residue Q172 coordinates phosphoenolpyruvate. D314 functions as the Proton acceptor in the catalytic mechanism. R346, R388, and K413 together coordinate phosphoenolpyruvate.

Belongs to the EPSP synthase family. As to quaternary structure, monomer.

It is found in the cytoplasm. It carries out the reaction 3-phosphoshikimate + phosphoenolpyruvate = 5-O-(1-carboxyvinyl)-3-phosphoshikimate + phosphate. It participates in metabolic intermediate biosynthesis; chorismate biosynthesis; chorismate from D-erythrose 4-phosphate and phosphoenolpyruvate: step 6/7. In terms of biological role, catalyzes the transfer of the enolpyruvyl moiety of phosphoenolpyruvate (PEP) to the 5-hydroxyl of shikimate-3-phosphate (S3P) to produce enolpyruvyl shikimate-3-phosphate and inorganic phosphate. The sequence is that of 3-phosphoshikimate 1-carboxyvinyltransferase from Pectobacterium atrosepticum (strain SCRI 1043 / ATCC BAA-672) (Erwinia carotovora subsp. atroseptica).